A 240-amino-acid polypeptide reads, in one-letter code: Inhibitor of growth protein 5 (240 aa).

K114 bears the N6-acetyllysine mark. Residues E116–T165 form a disordered region. S118 is modified (phosphoserine). Omega-N-methylarginine is present on R126. The segment at P186 to E235 adopts a PHD-type zinc-finger fold. Residues C189, C191, C202, C207, H213, C216, C229, and C232 each contribute to the Zn(2+) site.

This sequence belongs to the ING family. As to quaternary structure, component of the HBO1 complex composed of KAT7/HBO1, MEAF6, ING5, and one scaffold subunit: complexes containing BRPF scaffold (BRPF1, BRD1/BRPF2 or BRPF3) direct KAT7/HBO1 specificity towards H3K14ac, while complexes containing JADE scaffold (JADE1, JADE2 and JADE3) mediate acetylation of histone H4. Component of the MOZ/MORF complex composed at least of ING5, KAT6A, KAT6B, MEAF6 and one of BRPF1, BRD1/BRPF2 and BRPF3. Interacts with H3K4me3 and to a lesser extent with H3K4me2. Interacts with EP300 and p53/TP53. Interacts with INCA1. As to expression, down-regulated in bone marrow cells in acute myeloid leukemia patients as compared with normal bone marrow cells.

Its subcellular location is the nucleus. The protein localises to the chromosome. Component of the HBO1 complex, which specifically mediates acetylation of histone H3 at 'Lys-14' (H3K14ac) and, to a lower extent, acetylation of histone H4. Component of the MOZ/MORF complex which has a histone H3 acetyltransferase activity. Through chromatin acetylation it may regulate DNA replication and may function as a transcriptional coactivator. Inhibits cell growth, induces a delay in S-phase progression and enhances Fas-induced apoptosis in an INCA1-dependent manner. In Homo sapiens (Human), this protein is Inhibitor of growth protein 5 (ING5).